Reading from the N-terminus, the 343-residue chain is Fructose-bisphosphate aldolase (343 aa).

S53 provides a ligand contact to D-glyceraldehyde 3-phosphate. D95 (proton donor) is an active-site residue. Zn(2+) contacts are provided by H96, D131, E161, and H212. G213 serves as a coordination point for dihydroxyacetone phosphate. A Zn(2+)-binding site is contributed by H252. Dihydroxyacetone phosphate contacts are provided by residues 253–255 (GGS) and 274–277 (NIDT).

The protein belongs to the class II fructose-bisphosphate aldolase family. Requires Zn(2+) as cofactor.

The catalysed reaction is beta-D-fructose 1,6-bisphosphate = D-glyceraldehyde 3-phosphate + dihydroxyacetone phosphate. Its pathway is carbohydrate degradation; glycolysis; D-glyceraldehyde 3-phosphate and glycerone phosphate from D-glucose: step 4/4. Catalyzes the aldol condensation of dihydroxyacetone phosphate (DHAP or glycerone-phosphate) with glyceraldehyde 3-phosphate (G3P) to form fructose 1,6-bisphosphate (FBP) in gluconeogenesis and the reverse reaction in glycolysis. The polypeptide is Fructose-bisphosphate aldolase (fba) (Streptomyces coelicolor (strain ATCC BAA-471 / A3(2) / M145)).